The chain runs to 106 residues: Tapetal oleosin GRP-19 (106 aa).

A run of 3 helical transmembrane segments spans residues 14–34 (ALAL…ACII), 37–57 (PLFV…TLLA), and 58–78 (SGFT…SWLY). Positions 84-106 (RDLPKIPGLTPPAPASNPAGSGV) are disordered.

The protein belongs to the oleosin family. Proteolytically cleaved following anther tapetal breakdown. In terms of tissue distribution, present in pollen (at protein level). Inflorescence-specific expression, especially in flowers florets.

The protein localises to the secreted. It is found in the extracellular space. The protein resides in the extracellular matrix. It localises to the pollen coat. Its subcellular location is the lipid droplet. The protein localises to the membrane. Lipid-binding oleosin involved in anther tapetum development, especially for the physiology of tapetosomes. Also implicated in the formation of pollen coat. This chain is Tapetal oleosin GRP-19, found in Arabidopsis thaliana (Mouse-ear cress).